A 258-amino-acid polypeptide reads, in one-letter code: Flagellar L-ring protein (258 aa).

A signal peptide spans 1–15 (MKRIVCLALFLSMTG). A lipid anchor (N-palmitoyl cysteine) is attached at C16. C16 is lipidated: S-diacylglycerol cysteine.

This sequence belongs to the FlgH family. The basal body constitutes a major portion of the flagellar organelle and consists of four rings (L,P,S, and M) mounted on a central rod.

The protein resides in the cell outer membrane. Its subcellular location is the bacterial flagellum basal body. Functionally, assembles around the rod to form the L-ring and probably protects the motor/basal body from shearing forces during rotation. This Vibrio atlanticus (strain LGP32) (Vibrio splendidus (strain Mel32)) protein is Flagellar L-ring protein.